The sequence spans 99 residues: uncharacterized protein (99 aa).

Residues 76 to 96 form a helical membrane-spanning segment; sequence VLLGLASGMIGGIIGMFMWVL.

Its subcellular location is the host membrane. This is an uncharacterized protein from Haemophilus phage HP1 (strain HP1c1) (Bacteriophage HP1).